Consider the following 325-residue polypeptide: Heat-inducible transcription repressor HrcA (325 aa).

It belongs to the HrcA family.

Its function is as follows. Negative regulator of class I heat shock genes (grpE-dnaK-dnaJ and groELS operons). Prevents heat-shock induction of these operons. This chain is Heat-inducible transcription repressor HrcA, found in Staphylococcus epidermidis (strain ATCC 35984 / DSM 28319 / BCRC 17069 / CCUG 31568 / BM 3577 / RP62A).